The following is a 485-amino-acid chain: Glutamyl-tRNA(Gln) amidotransferase subunit A (485 aa).

Catalysis depends on charge relay system residues Lys-79 and Ser-154. Ser-178 functions as the Acyl-ester intermediate in the catalytic mechanism.

This sequence belongs to the amidase family. GatA subfamily. As to quaternary structure, heterotrimer of A, B and C subunits.

The catalysed reaction is L-glutamyl-tRNA(Gln) + L-glutamine + ATP + H2O = L-glutaminyl-tRNA(Gln) + L-glutamate + ADP + phosphate + H(+). In terms of biological role, allows the formation of correctly charged Gln-tRNA(Gln) through the transamidation of misacylated Glu-tRNA(Gln) in organisms which lack glutaminyl-tRNA synthetase. The reaction takes place in the presence of glutamine and ATP through an activated gamma-phospho-Glu-tRNA(Gln). This chain is Glutamyl-tRNA(Gln) amidotransferase subunit A, found in Geobacillus kaustophilus (strain HTA426).